The chain runs to 296 residues: MTSTITRKEDGEGSVQVKQDPKAQIQEGALVIAVYGKGGIGKSTTSSNLSAAFSKLGKKVLQIGCDPKHDSTFTLTHKMVPTVIDILEEVDFHSEELRPEDFMFKGFNGVMCVESGGPPAGTGCGGYVTGQTVKLLKEHHLLEDTDVVIFDVLGDVVCGGFAAPLQHANYCLIVTANDFDSIFAMNRIVAAINAKAKNYKVRLGGVIANRSAELDQIEKFNERTGLKTMAHFRNVDAIRRSRLKKCTIFEMDSEEEGVVEVQNEYLSLAQKMIDNVEPLEAEPLKDREIFDLLGFD.

The segment covering 1-11 (MTSTITRKEDG) has biased composition (basic and acidic residues). The interval 1–20 (MTSTITRKEDGEGSVQVKQD) is disordered. ATP-binding positions include 39-44 (GIGKST) and Lys68. Ser43 contributes to the Mg(2+) binding site. 2 residues coordinate [4Fe-4S] cluster: Cys124 and Cys158. Residue 209–210 (NR) coordinates ATP.

This sequence belongs to the NifH/BchL/ChlL family. In terms of assembly, homodimer. Protochlorophyllide reductase is composed of three subunits; ChlL, ChlN and ChlB. It depends on [4Fe-4S] cluster as a cofactor.

It carries out the reaction chlorophyllide a + oxidized 2[4Fe-4S]-[ferredoxin] + 2 ADP + 2 phosphate = protochlorophyllide a + reduced 2[4Fe-4S]-[ferredoxin] + 2 ATP + 2 H2O. Its pathway is porphyrin-containing compound metabolism; chlorophyll biosynthesis (light-independent). Functionally, component of the dark-operative protochlorophyllide reductase (DPOR) that uses Mg-ATP and reduced ferredoxin to reduce ring D of protochlorophyllide (Pchlide) to form chlorophyllide a (Chlide). This reaction is light-independent. The L component serves as a unique electron donor to the NB-component of the complex, and binds Mg-ATP. In Prochlorococcus marinus (strain NATL1A), this protein is Light-independent protochlorophyllide reductase iron-sulfur ATP-binding protein.